The following is a 435-amino-acid chain: Serine hydroxymethyltransferase (435 aa).

Residues leucine 133 and 137-139 each bind (6S)-5,6,7,8-tetrahydrofolate; that span reads GHL. Position 242 is an N6-(pyridoxal phosphate)lysine (lysine 242).

This sequence belongs to the SHMT family. As to quaternary structure, homodimer. Pyridoxal 5'-phosphate is required as a cofactor.

Its subcellular location is the cytoplasm. The catalysed reaction is (6R)-5,10-methylene-5,6,7,8-tetrahydrofolate + glycine + H2O = (6S)-5,6,7,8-tetrahydrofolate + L-serine. The protein operates within one-carbon metabolism; tetrahydrofolate interconversion. It participates in amino-acid biosynthesis; glycine biosynthesis; glycine from L-serine: step 1/1. Catalyzes the reversible interconversion of serine and glycine with tetrahydrofolate (THF) serving as the one-carbon carrier. This reaction serves as the major source of one-carbon groups required for the biosynthesis of purines, thymidylate, methionine, and other important biomolecules. Also exhibits THF-independent aldolase activity toward beta-hydroxyamino acids, producing glycine and aldehydes, via a retro-aldol mechanism. The protein is Serine hydroxymethyltransferase of Sphingopyxis alaskensis (strain DSM 13593 / LMG 18877 / RB2256) (Sphingomonas alaskensis).